The primary structure comprises 643 residues: Long-chain fatty acid transport protein 4 (643 aa).

The next 2 membrane-spanning stretches (helical) occupy residues 20-42 and 139-156; these read LPWT…WRFI and FVGL…AALI. 243 to 254 provides a ligand contact to AMP; it reads YIYTSGTTGLPK.

Belongs to the ATP-dependent AMP-binding enzyme family. Expressed at highest levels in brain, testis, colon and kidney. Expressed at medium levels in heart and liver, small intestine and stomach. Expressed at low levels in peripheral leukocytes, bone marrow, skeletal muscle and aorta. Expressed in adipose tissue. Expressed in brain gray matter.

It is found in the endoplasmic reticulum membrane. The enzyme catalyses a fatty acid(in) = a fatty acid(out). It catalyses the reaction (9Z,12Z)-octadecadienoate(out) = (9Z,12Z)-octadecadienoate(in). It carries out the reaction (9Z)-octadecenoate(out) = (9Z)-octadecenoate(in). The catalysed reaction is hexadecanoate(out) = hexadecanoate(in). The enzyme catalyses a long-chain fatty acid + ATP + CoA = a long-chain fatty acyl-CoA + AMP + diphosphate. It catalyses the reaction hexadecanoate + ATP + CoA = hexadecanoyl-CoA + AMP + diphosphate. It carries out the reaction (E)-hexadec-2-enoate + ATP + CoA = (2E)-hexadecenoyl-CoA + AMP + diphosphate. The catalysed reaction is (9Z)-octadecenoate + ATP + CoA = (9Z)-octadecenoyl-CoA + AMP + diphosphate. The enzyme catalyses (5Z,8Z,11Z,14Z)-eicosatetraenoate + ATP + CoA = (5Z,8Z,11Z,14Z)-eicosatetraenoyl-CoA + AMP + diphosphate. It catalyses the reaction a very long-chain fatty acid + ATP + CoA = a very long-chain fatty acyl-CoA + AMP + diphosphate. It carries out the reaction tetracosanoate + ATP + CoA = tetracosanoyl-CoA + AMP + diphosphate. Its function is as follows. Mediates the levels of long-chain fatty acids (LCFA) in the cell by facilitating their transport across cell membranes. Appears to be the principal fatty acid transporter in small intestinal enterocytes. Also functions as an acyl-CoA ligase catalyzing the ATP-dependent formation of fatty acyl-CoA using LCFA and very-long-chain fatty acids (VLCFA) as substrates, which prevents fatty acid efflux from cells and might drive more fatty acid uptake. Plays a role in the formation of the epidermal barrier. Required for fat absorption in early embryogenesis. Probably involved in fatty acid transport across the blood barrier. Indirectly inhibits RPE65 via substrate competition and via production of VLCFA derivatives like lignoceroyl-CoA. Prevents light-induced degeneration of rods and cones. This chain is Long-chain fatty acid transport protein 4, found in Homo sapiens (Human).